The sequence spans 293 residues: Single-pass membrane and coiled-coil domain-containing protein 2 (293 aa).

Residues 116 to 188 (KNLLEFLLKD…SAKLRMYQME (73 aa)) adopt a coiled-coil conformation. Residues 234-254 (IFIMFYVLTVTGLLCYILFFG) traverse the membrane as a helical segment.

Its subcellular location is the membrane. The polypeptide is Single-pass membrane and coiled-coil domain-containing protein 2 (SMCO2) (Macaca fascicularis (Crab-eating macaque)).